The sequence spans 70 residues: Antimicrobial peptide VpCT1 (70 aa).

A signal peptide spans 1-23; sequence MKNQFAVLLVALVLLQLFSQSEA. A Leucine amide modification is found at L36. A propeptide spanning residues 37 to 70 is cleaved from the precursor; it reads GKRGLRNFDLEQMDDTYEPELSEADLRYLQDLLR.

This sequence belongs to the non-disulfide-bridged peptide (NDBP) superfamily. Short antimicrobial peptide (group 4) family. In terms of tissue distribution, expressed by the venom gland.

The protein resides in the secreted. It localises to the target cell membrane. Functionally, antimicrobial peptide with potent activity against bacteria S.aureus (MIC=4.7 uM) and E.coli (MIC=31.5 uM), and pathogenic yeasts C.albicans (MIC=25 uM) and C.glabrata (MIC=12.5 uM). Is not very effective against P.aeruginosa (MIC=150 and &gt;300 uM). Also provokes moderate hemolysis on human erythrocytes (HC(50)=10.5 uM). This chain is Antimicrobial peptide VpCT1, found in Mesomexovis punctatus (Scorpion).